The sequence spans 105 residues: uncharacterized protein (105 aa).

Residues 81–105 (NNNNKTITVDNNNNNNNNNNNNNNK) are disordered.

This is an uncharacterized protein from Dictyostelium discoideum (Social amoeba).